The sequence spans 216 residues: Pyrrolidone-carboxylate peptidase (216 aa).

Active-site residues include glutamate 80, cysteine 143, and histidine 167.

Belongs to the peptidase C15 family. As to quaternary structure, homotetramer.

Its subcellular location is the cytoplasm. The enzyme catalyses Release of an N-terminal pyroglutamyl group from a polypeptide, the second amino acid generally not being Pro.. Functionally, removes 5-oxoproline from various penultimate amino acid residues except L-proline. This is Pyrrolidone-carboxylate peptidase (pcp) from Streptomyces coelicolor (strain ATCC BAA-471 / A3(2) / M145).